The chain runs to 248 residues: 2,3-bisphosphoglycerate-dependent phosphoglycerate mutase (248 aa).

Substrate-binding positions include 8–15, 21–22, arginine 60, 87–90, lysine 98, 114–115, and 183–184; these read RHGESTWN, TG, ERHY, RR, and GN. Residue histidine 9 is the Tele-phosphohistidine intermediate of the active site. Residue glutamate 87 is the Proton donor/acceptor of the active site.

Belongs to the phosphoglycerate mutase family. BPG-dependent PGAM subfamily. As to quaternary structure, homodimer.

It carries out the reaction (2R)-2-phosphoglycerate = (2R)-3-phosphoglycerate. It participates in carbohydrate degradation; glycolysis; pyruvate from D-glyceraldehyde 3-phosphate: step 3/5. Its function is as follows. Catalyzes the interconversion of 2-phosphoglycerate and 3-phosphoglycerate. In Paraburkholderia phytofirmans (strain DSM 17436 / LMG 22146 / PsJN) (Burkholderia phytofirmans), this protein is 2,3-bisphosphoglycerate-dependent phosphoglycerate mutase.